The following is a 255-amino-acid chain: Homeobox protein Hox-D4 (255 aa).

A disordered region spans residues Glu31–Leu127. The segment covering Glu94 to Leu107 has biased composition (pro residues). The Antp-type hexapeptide signature appears at Val133–Lys138. Residues Pro154–His213 constitute a DNA-binding region (homeobox). Residues Asp212–Leu255 are disordered. A compositionally biased stretch (low complexity) spans Ser222–Ser234. Residues Ala245–Leu255 show a composition bias toward basic and acidic residues.

The protein belongs to the Antp homeobox family. Deformed subfamily. In terms of assembly, forms a DNA-binding heterodimer with transcription factor PBX1.

The protein localises to the nucleus. Its function is as follows. Sequence-specific transcription factor which is part of a developmental regulatory system that provides cells with specific positional identities on the anterior-posterior axis. This chain is Homeobox protein Hox-D4 (HOXD4), found in Homo sapiens (Human).